We begin with the raw amino-acid sequence, 634 residues long: Growth hormone receptor (634 aa).

A signal peptide spans 1-18 (MDLWQLLLTLAVAGSSDA). Residues 19 to 260 (FSGSEATPAF…NPSACEEDFQ (242 aa)) are Extracellular-facing. N-linked (GlcNAc...) asparagine glycosylation is present at Asn-46. Cys-56 and Cys-66 form a disulfide bridge. Residue Asn-73 is glycosylated (N-linked (GlcNAc...) asparagine). Residues Cys-97 and Cys-108 are joined by a disulfide bond. N-linked (GlcNAc...) asparagine glycosylation is present at Asn-111. Cys-122 and Cys-136 form a disulfide bridge. The 104-residue stretch at 147–250 (PPVGLNWTLL…EVLLITFPQM (104 aa)) folds into the Fibronectin type-III domain. N-linked (GlcNAc...) asparagine glycosylation is found at Asn-152, Asn-157, and Asn-196. Residues 236–240 (YGKFS) carry the WSXWS motif motif. Residues 261 to 284 (FPWFLIIMFGILGLAVTLFLLIFS) form a helical membrane-spanning segment. At 285 to 634 (KQQRIKMLIL…STDQLNKIMP (350 aa)) the chain is on the cytoplasmic side. The required for JAK2 binding stretch occupies residues 290–375 (KMLILPPVPV…HEKSLNIFGA (86 aa)). The Box 1 motif signature appears at 293–301 (ILPPVPVPK). Residues 336 to 345 (DSWVEFIELD) carry the UbE motif motif. Ser-337 bears the Phosphoserine mark. 2 positions are modified to phosphotyrosine: Tyr-483 and Tyr-591.

This sequence belongs to the type I cytokine receptor family. Type 1 subfamily. On growth hormone (GH) binding, forms homodimers and binds JAK2 via a box 1-containing domain. Post-translationally, the soluble form (GHBP) is produced by phorbol ester-promoted proteolytic cleavage at the cell surface (shedding) by ADAM17/TACE. Shedding is inhibited by growth hormone (GH) binding to the receptor probably due to a conformational change in GHR rendering the receptor inaccessible to ADAM17. On GH binding, phosphorylated on tyrosine residues in the cytoplasmic domain by JAK2. In terms of processing, ubiquitinated by the ECS(SOCS2) complex following ligand-binding and phosphorylation by JAK2, leading to its degradation by the proteasome. Regulation by the ECS(SOCS2) complex acts as a negative feedback loop of growth hormone receptor signaling. Ubiquitination is not sufficient for GHR internalization.

It localises to the cell membrane. The protein resides in the secreted. Receptor for pituitary gland growth hormone (GH1) involved in regulating postnatal body growth. On ligand binding, couples to the JAK2/STAT5 pathway. In terms of biological role, the soluble form (GHBP) acts as a reservoir of growth hormone in plasma and may be a modulator/inhibitor of GH signaling. This chain is Growth hormone receptor (GHR), found in Bos indicus (Zebu).